Consider the following 658-residue polypeptide: Translation factor GUF1, mitochondrial (658 aa).

Residues 1 to 40 constitute a mitochondrion transit peptide; that stretch reads MRGCLQTVRWLTSAWQRPRSYSPLSRAAPCRFFNVSIPRN. Residues 60-240 enclose the tr-type G domain; the sequence is DRFRNFCIVA…TVVEQIPAPV (181 aa). Residues 69 to 76, 133 to 137, and 187 to 190 contribute to the GTP site; these read AHVDHGKS, DTPGH, and NKVD.

This sequence belongs to the TRAFAC class translation factor GTPase superfamily. Classic translation factor GTPase family. LepA subfamily.

Its subcellular location is the mitochondrion inner membrane. The catalysed reaction is GTP + H2O = GDP + phosphate + H(+). Its function is as follows. Promotes mitochondrial protein synthesis. May act as a fidelity factor of the translation reaction, by catalyzing a one-codon backward translocation of tRNAs on improperly translocated ribosomes. Binds to mitochondrial ribosomes in a GTP-dependent manner. This is Translation factor GUF1, mitochondrial from Paracoccidioides lutzii (strain ATCC MYA-826 / Pb01) (Paracoccidioides brasiliensis).